A 144-amino-acid chain; its full sequence is uncharacterized protein (144 aa).

The next 2 helical transmembrane spans lie at 76-96 (LLSA…VTML) and 105-125 (ILRA…VKSY).

Belongs to the RseC family.

The protein localises to the cell inner membrane. This is an uncharacterized protein from Haemophilus influenzae (strain ATCC 51907 / DSM 11121 / KW20 / Rd).